Consider the following 764-residue polypeptide: Mitogen-activated protein kinase kinase kinase 1b (764 aa).

4 disordered regions span residues 1 to 81 (MVEE…IQQQ), 120 to 260 (KSIA…TATR), 325 to 348 (PNLA…SSAM), and 360 to 392 (VPEL…HYGS). Gly residues predominate over residues 14–30 (GSWGSGEDGGSSHGGKG). Low complexity-rich tracts occupy residues 60–76 (VHST…LSKS) and 125–135 (SQPLSSPSLSQ). Positions 136–145 (EHGEASHSND) are enriched in basic and acidic residues. Residues 184–201 (YVNSQPQNHYGRKNSPSQ) show a composition bias toward polar residues. The Protein kinase domain maps to 431 to 684 (WFKGDFIGSG…CDMLLTHPFI (254 aa)). ATP-binding positions include 437-445 (IGSGTFGSV) and Lys-459. The Proton acceptor role is filled by Asp-554. A disordered region spans residues 706–764 (EERSIDVSESPSIATSSQSGSSPSVAGDAVSPASVAVRPRSMRTLRSEFSMSSPESIAS). Low complexity predominate over residues 715-729 (SPSIATSSQSGSSPS). The segment covering 752 to 764 (SEFSMSSPESIAS) has biased composition (polar residues).

It belongs to the protein kinase superfamily. STE Ser/Thr protein kinase family. MAP kinase kinase kinase subfamily.

The protein resides in the cell membrane. It carries out the reaction L-seryl-[protein] + ATP = O-phospho-L-seryl-[protein] + ADP + H(+). It catalyses the reaction L-threonyl-[protein] + ATP = O-phospho-L-threonyl-[protein] + ADP + H(+). Functionally, the CERK1, MEKK1a/b, MKK1a/b/c and MPK4a/b proteins are involved in pathogen defense. The pathway induces rapid growth inhibition, cell wall depositions and accumulation of defense-related transcripts. This protein is required for responses to chitin and acts redundantly with MEKK1a. This is Mitogen-activated protein kinase kinase kinase 1b (MEKK1b) from Physcomitrium patens (Spreading-leaved earth moss).